Consider the following 258-residue polypeptide: Pimeloyl-[acyl-carrier protein] methyl ester esterase (258 aa).

The AB hydrolase-1 domain maps to leucine 16–proline 242. Residues tryptophan 22, serine 82–leucine 83, and phenylalanine 143–glutamine 147 contribute to the substrate site. Serine 82 serves as the catalytic Nucleophile. Catalysis depends on residues aspartate 207 and histidine 235. A substrate-binding site is contributed by histidine 235.

This sequence belongs to the AB hydrolase superfamily. Carboxylesterase BioH family. Monomer.

It localises to the cytoplasm. The catalysed reaction is 6-carboxyhexanoyl-[ACP] methyl ester + H2O = 6-carboxyhexanoyl-[ACP] + methanol + H(+). The protein operates within cofactor biosynthesis; biotin biosynthesis. The physiological role of BioH is to remove the methyl group introduced by BioC when the pimeloyl moiety is complete. It allows to synthesize pimeloyl-ACP via the fatty acid synthetic pathway through the hydrolysis of the ester bonds of pimeloyl-ACP esters. In Edwardsiella ictaluri (strain 93-146), this protein is Pimeloyl-[acyl-carrier protein] methyl ester esterase.